The following is a 391-amino-acid chain: S-adenosylmethionine synthase (391 aa).

A disordered region spans residues 1–20 (MPRSDYLFTSESVSEGHPDK). H17 contributes to the ATP binding site. Position 19 (D19) interacts with Mg(2+). A K(+)-binding site is contributed by E45. Residues E58 and Q102 each contribute to the L-methionine site. Positions 102 to 112 (QSADIAQGVDA) are flexible loop. ATP contacts are provided by residues 169–171 (DAK), 235–236 (KF), D244, 250–251 (RK), A267, and K271. An L-methionine-binding site is contributed by D244. K275 lines the L-methionine pocket.

The protein belongs to the AdoMet synthase family. As to quaternary structure, homotetramer; dimer of dimers. Mg(2+) is required as a cofactor. The cofactor is K(+).

Its subcellular location is the cytoplasm. It carries out the reaction L-methionine + ATP + H2O = S-adenosyl-L-methionine + phosphate + diphosphate. It functions in the pathway amino-acid biosynthesis; S-adenosyl-L-methionine biosynthesis; S-adenosyl-L-methionine from L-methionine: step 1/1. In terms of biological role, catalyzes the formation of S-adenosylmethionine (AdoMet) from methionine and ATP. The overall synthetic reaction is composed of two sequential steps, AdoMet formation and the subsequent tripolyphosphate hydrolysis which occurs prior to release of AdoMet from the enzyme. The protein is S-adenosylmethionine synthase of Methylorubrum extorquens (strain CM4 / NCIMB 13688) (Methylobacterium extorquens).